Consider the following 147-residue polypeptide: DNA-directed RNA polymerase I subunit rpa14 (147 aa).

The tract at residues 71 to 147 (VQGPPTEELI…TQGVGEKEQS (77 aa)) is disordered. Positions 74–84 (PPTEELIIPPE) are enriched in low complexity. Residues 87–111 (LETKEEESLKHAREENDDLHLDKET) are compositionally biased toward basic and acidic residues. Residues 112–124 (KKRLKKEKKKAAR) show a composition bias toward basic residues. The segment covering 125-135 (REKEEARKAKA) has biased composition (basic and acidic residues).

In terms of assembly, component of the RNA polymerase I (Pol I) complex consisting of 14 subunits. Part of a Pol I subcomplex consisting of the subunits A14 and A43. Interacts with rpa43. Post-translationally, phosphorylated.

The protein localises to the nucleus. Its subcellular location is the nucleolus. Its function is as follows. DNA-dependent RNA polymerase catalyzes the transcription of DNA into RNA using the four ribonucleoside triphosphates as substrates. Component of RNA polymerase I which synthesizes ribosomal RNA precursors. A14 seems to play a role in the stability of Pol I subunit A43 and association of rrn3 to Pol I. In Schizosaccharomyces pombe (strain 972 / ATCC 24843) (Fission yeast), this protein is DNA-directed RNA polymerase I subunit rpa14 (ker1).